Consider the following 671-residue polypeptide: UvrABC system protein B (671 aa).

Residues 35-423 enclose the Helicase ATP-binding domain; it reads KAIIENKKHQ…NHQVVQQIIR (389 aa). Position 48–55 (48–55) interacts with ATP; sequence GATGTGKT. Positions 101–124 match the Beta-hairpin motif; sequence NFDFFQPEAYIPSKDLYIDKDSRQ. Residues 440–602 enclose the Helicase C-terminal domain; it reads QIDDIINEIH…IVPKTISKAI (163 aa). Residues 632-667 form the UVR domain; it reads QQTIDNLRQEMLQAAKELDFERAAILRDTIIELENE.

Belongs to the UvrB family. As to quaternary structure, forms a heterotetramer with UvrA during the search for lesions. Interacts with UvrC in an incision complex.

The protein localises to the cytoplasm. In terms of biological role, the UvrABC repair system catalyzes the recognition and processing of DNA lesions. A damage recognition complex composed of 2 UvrA and 2 UvrB subunits scans DNA for abnormalities. Upon binding of the UvrA(2)B(2) complex to a putative damaged site, the DNA wraps around one UvrB monomer. DNA wrap is dependent on ATP binding by UvrB and probably causes local melting of the DNA helix, facilitating insertion of UvrB beta-hairpin between the DNA strands. Then UvrB probes one DNA strand for the presence of a lesion. If a lesion is found the UvrA subunits dissociate and the UvrB-DNA preincision complex is formed. This complex is subsequently bound by UvrC and the second UvrB is released. If no lesion is found, the DNA wraps around the other UvrB subunit that will check the other stand for damage. The chain is UvrABC system protein B from Mycoplasma mycoides subsp. mycoides SC (strain CCUG 32753 / NCTC 10114 / PG1).